An 86-amino-acid polypeptide reads, in one-letter code: Maxadilan (86 aa).

The first 23 residues, 1–23 (MKQILLISLVVVLAVFAFNVAEG), serve as a signal peptide directing secretion. 2 disulfides stabilise this stretch: Cys24/Cys28 and Cys37/Cys74.

In terms of assembly, interacts with human ADCYAP1R1. In terms of tissue distribution, salivary gland (at protein level).

Its subcellular location is the secreted. Functionally, potent vasodilator. Activates mammalian ADCYAP1R1, a PAC1 receptor, and induces cAMP accumulation in host cells. Causes the development of erythema following superficial injection into the rabbit or human skin. Influences adaptive immune responses mediated by host dendritic cells. Reduces surface expression of CD80 on host dendritic cells stimulated with lipopolysaccharides (LPS) and induces concomitant increase in CD86 expression on a subpopulation of these cells. Redirects cytokine secretion by LPS-activated host dendritic cells toward type 2 responses: decreases secretion of TNF-alpha/TNF, IL-12p40/IL12B and IFN-gamma/IFNG, and increases secretion of IL6 and IL10. Reduces ability of host bone marrow-derived dendritic cells to stimulate proliferation of CD4(+) T-cells. Reprograms the effect of LPS-activated host dendritic cells on cytokine secretion profiles in host T-cells: decreases secretion of TNF-alpha/TNF and IFN-gamma/IFNG, increases secretion of IL6 and IL13, and increases secretion of pro-inflammatory cytokine IL-1beta/IL1B in mixed lymphocyte reaction (MLR) cultures. Reduces LPS-induced up-regulation of CCR7 in activated host dendritic cells. Inhibits IFN-gamma/IFNG and IL-12p40/IL12B production by human peripheral blood mononuclear cells. Increases IL6 and decreases TNF-alpha/TNF production by LPS-stimulated human monocytes. In terms of biological role, (Microbial infection) Probably plays a critical role in the enhancement of Leishmania infectivity in the host attributed to sand fly saliva. The protein is Maxadilan of Lutzomyia longipalpis (Sand fly).